A 304-amino-acid polypeptide reads, in one-letter code: UDP-N-acetylenolpyruvoylglucosamine reductase (304 aa).

The 167-residue stretch at 32–198 (RVGGPADILV…LSAELELQEG (167 aa)) folds into the FAD-binding PCMH-type domain. Arg-177 is an active-site residue. The Proton donor role is filled by Ser-227. Glu-297 is a catalytic residue.

It belongs to the MurB family. It depends on FAD as a cofactor.

The protein localises to the cytoplasm. It catalyses the reaction UDP-N-acetyl-alpha-D-muramate + NADP(+) = UDP-N-acetyl-3-O-(1-carboxyvinyl)-alpha-D-glucosamine + NADPH + H(+). The protein operates within cell wall biogenesis; peptidoglycan biosynthesis. Its function is as follows. Cell wall formation. The chain is UDP-N-acetylenolpyruvoylglucosamine reductase from Clostridioides difficile (strain 630) (Peptoclostridium difficile).